A 697-amino-acid chain; its full sequence is Elongation factor G 2 (697 aa).

A tr-type G domain is found at 5 to 280 (SKYRNIGIFA…AVVDYLPAPN (276 aa)). GTP contacts are provided by residues 14-21 (AHVDAGKT), 78-82 (DTPGH), and 132-135 (NKLD).

This sequence belongs to the TRAFAC class translation factor GTPase superfamily. Classic translation factor GTPase family. EF-G/EF-2 subfamily.

It localises to the cytoplasm. Functionally, catalyzes the GTP-dependent ribosomal translocation step during translation elongation. During this step, the ribosome changes from the pre-translocational (PRE) to the post-translocational (POST) state as the newly formed A-site-bound peptidyl-tRNA and P-site-bound deacylated tRNA move to the P and E sites, respectively. Catalyzes the coordinated movement of the two tRNA molecules, the mRNA and conformational changes in the ribosome. This is Elongation factor G 2 from Shewanella sp. (strain MR-4).